The chain runs to 247 residues: ATP synthase subunit a 1 (247 aa).

6 helical membrane-spanning segments follow: residues 32–52, 82–102, 112–132, 141–161, 181–201, and 206–226; these read YMLLAVVLIAGMMLAAGRALV, FFPLVFSLFMFIFVSNIVGII, IIVTFSLALLVFLTVIIYGFY, LFVPSGIPAVILPLVVVIEII, GHVTLKVFASFVTMLGALGFV, and ALLPLGLTVALTGLELMVAFL.

The protein belongs to the ATPase A chain family. In terms of assembly, F-type ATPases have 2 components, CF(1) - the catalytic core - and CF(0) - the membrane proton channel. CF(1) has five subunits: alpha(3), beta(3), gamma(1), delta(1), epsilon(1). CF(0) has four main subunits: a, b, b' and c.

It localises to the cell inner membrane. Functionally, key component of the proton channel; it plays a direct role in the translocation of protons across the membrane. The sequence is that of ATP synthase subunit a 1 from Bradyrhizobium sp. (strain BTAi1 / ATCC BAA-1182).